The sequence spans 660 residues: DNA mismatch repair protein MutL (660 aa).

It belongs to the DNA mismatch repair MutL/HexB family.

Functionally, this protein is involved in the repair of mismatches in DNA. It is required for dam-dependent methyl-directed DNA mismatch repair. May act as a 'molecular matchmaker', a protein that promotes the formation of a stable complex between two or more DNA-binding proteins in an ATP-dependent manner without itself being part of a final effector complex. This Streptococcus pyogenes serotype M12 (strain MGAS2096) protein is DNA mismatch repair protein MutL.